Reading from the N-terminus, the 203-residue chain is Peptidyl-tRNA hydrolase (203 aa).

Tyr-14 contacts tRNA. His-19 functions as the Proton acceptor in the catalytic mechanism. Tyr-64, Asn-66, and Asn-112 together coordinate tRNA.

This sequence belongs to the PTH family. Monomer.

It is found in the cytoplasm. The enzyme catalyses an N-acyl-L-alpha-aminoacyl-tRNA + H2O = an N-acyl-L-amino acid + a tRNA + H(+). Its function is as follows. Hydrolyzes ribosome-free peptidyl-tRNAs (with 1 or more amino acids incorporated), which drop off the ribosome during protein synthesis, or as a result of ribosome stalling. Functionally, catalyzes the release of premature peptidyl moieties from peptidyl-tRNA molecules trapped in stalled 50S ribosomal subunits, and thus maintains levels of free tRNAs and 50S ribosomes. This Methylobacterium sp. (strain 4-46) protein is Peptidyl-tRNA hydrolase.